The chain runs to 632 residues: Pentatricopeptide repeat-containing protein ELI1, chloroplastic (632 aa).

The transit peptide at 1–19 (MASSPLLATSLPQNQLSTT) directs the protein to the chloroplast. 10 PPR repeats span residues 94–128 (DLFL…EINP), 129–159 (NEFT…GLGI), 160–194 (DPYV…SLVS), 196–221 (TAMI…MCER), 222–256 (DIVS…GKPK), 258–292 (DEIT…RIRL), 293–323 (NVKV…TPRK), 324–354 (DIVA…MQGI), 360–395 (TDIT…GIKP), and 396–426 (KIEH…MNMD). The type E motif stretch occupies residues 431–506 (LWSSVLGSCK…EPGISTIEIE (76 aa)). Positions 497–512 (EPGISTIEIENKVHEF) are required for function in RNA editing. The segment at 507 to 537 (NKVHEFRAGDREHSKSKEIYTMLRKISERIK) is type E(+) motif. Positions 538–632 (SHGYVPNTNT…DGSCSCGDFW (95 aa)) are type DYW motif.

The protein belongs to the PPR family. PCMP-H subfamily. It depends on Zn(2+) as a cofactor.

It is found in the plastid. The protein localises to the chloroplast. Functionally, plays a major role in single RNA editing events in chloroplasts. Acts as a site-recognition transacting factor involved in the edition of the site 5 of ndhB1 and ndhB2 (ndhB1-5 and ndhB2-5 sites corresponding to cytidine-830), which are plastid-encoded subunits of the NADH-plastoquinone oxidoreductase. May provide the catalytic activity for editing site conversion. The protein is Pentatricopeptide repeat-containing protein ELI1, chloroplastic of Arabidopsis thaliana (Mouse-ear cress).